A 501-amino-acid chain; its full sequence is ATP synthase subunit alpha (501 aa).

170-177 (GDRQTGKS) serves as a coordination point for ATP.

The protein belongs to the ATPase alpha/beta chains family. F-type ATPases have 2 components, CF(1) - the catalytic core - and CF(0) - the membrane proton channel. CF(1) has five subunits: alpha(3), beta(3), gamma(1), delta(1), epsilon(1). CF(0) has three main subunits: a(1), b(2) and c(9-12). The alpha and beta chains form an alternating ring which encloses part of the gamma chain. CF(1) is attached to CF(0) by a central stalk formed by the gamma and epsilon chains, while a peripheral stalk is formed by the delta and b chains.

It is found in the cell membrane. It catalyses the reaction ATP + H2O + 4 H(+)(in) = ADP + phosphate + 5 H(+)(out). Functionally, produces ATP from ADP in the presence of a proton gradient across the membrane. The alpha chain is a regulatory subunit. This Acholeplasma laidlawii (strain PG-8A) protein is ATP synthase subunit alpha.